A 238-amino-acid chain; its full sequence is 2-C-methyl-D-erythritol 4-phosphate cytidylyltransferase (238 aa).

It belongs to the IspD/TarI cytidylyltransferase family. IspD subfamily.

The catalysed reaction is 2-C-methyl-D-erythritol 4-phosphate + CTP + H(+) = 4-CDP-2-C-methyl-D-erythritol + diphosphate. The protein operates within isoprenoid biosynthesis; isopentenyl diphosphate biosynthesis via DXP pathway; isopentenyl diphosphate from 1-deoxy-D-xylulose 5-phosphate: step 2/6. Functionally, catalyzes the formation of 4-diphosphocytidyl-2-C-methyl-D-erythritol from CTP and 2-C-methyl-D-erythritol 4-phosphate (MEP). This Shewanella amazonensis (strain ATCC BAA-1098 / SB2B) protein is 2-C-methyl-D-erythritol 4-phosphate cytidylyltransferase.